We begin with the raw amino-acid sequence, 431 residues long: MNSKMEKLEKNVIKFEITVDESKFNEAVIKSYNKNRRRFNVPGFRKGKAPLNIIKNYYGVGVLYEDAINFCIDDTYPEVIKENDIHPVAYPEIDIVTLEEGKDFVYTAKVTVKPEVELGEYKGVEVTKVEYPVTDEDVENELKGMQEKNARIELKEDGEAVEKGDIAVIDFKGYVDDVAFEGGEGKDYSLEIGSGTFIDNFEDQLVGLKKDESKDVNVKFPEEYGKEELNGKPAKFEVTIKEIKRKELPALDDEFAKEVSEFDTLDEVKADIRSKMEKANEEKAKIEFEDKVVDAAVENAKIEIPEVMVKNETDQMLKELESRLRYQGLDLKSYYEYTNSSEEKVRDYMKETADKRVRTKLVMEKISEVEKVEATEEELKEKAKEMAQQYTNKDLDKMAELVLNSQRSMIEQDVINGKVIDLLVENAKVVE.

The PPIase FKBP-type domain maps to Gly164–Pro249.

This sequence belongs to the FKBP-type PPIase family. Tig subfamily.

It is found in the cytoplasm. It carries out the reaction [protein]-peptidylproline (omega=180) = [protein]-peptidylproline (omega=0). In terms of biological role, involved in protein export. Acts as a chaperone by maintaining the newly synthesized protein in an open conformation. Functions as a peptidyl-prolyl cis-trans isomerase. The sequence is that of Trigger factor from Clostridium acetobutylicum (strain ATCC 824 / DSM 792 / JCM 1419 / IAM 19013 / LMG 5710 / NBRC 13948 / NRRL B-527 / VKM B-1787 / 2291 / W).